The primary structure comprises 757 residues: MALGEEKAEAEASEDTKAQSYGRGSCRERELDIPGPMSGEQPPRLEAEGGLISPVWGAEGIPAPTCWIGTDPGGPSRAHQPQASDANREPVAERSEPALSGLPPATMGSGDLLLSGESQVEKTKLSSSEEFPQTLSLPRTTTICSGHDADTEDDPSLADLPQALDLSQQPHSSGLSCLSQWKSVLSPGSAAQPSSCSISASSTGSSLQGHQERAEPRGGSLAKVSSSLEPVVPQEPSSVVGLGPRPQWSPQPVFSGGDASGLGRRRLSFQAEYWACVLPDSLPPSPDRHSPLWNPNKEYEDLLDYTYPLRPGPQLPKHLDSRVPADPVLQDSGVDLDSFSVSPASTLKSPTNVSPNCPPAEATALPFSGPREPSLKQWPSRVPQKQGGMGLASWSQLASTPRAPGSRDARWERREPALRGAKDRLTIGKHLDMGSPQLRTRDRGWPSPRPEREKRTSQSARRPTCTESRWKSEEEVESDDEYLALPARLTQVSSLVSYLGSISTLVTLPTGDIKGQSPLEVSDSDGPASFPSSSSQSQLPPGAALQGSGDPEGQNPCFLRSFVRAHDSAGEGSLGSSQALGVSSGLLKTRPSLPARLDRWPFSDPDVEGQLPRKGGEQGKESLVQCVKTFCCQLEELICWLYNVADVTDHGTAARSNLTSLKSSLQLYRQFKKDIDEHQSLTESVLQKGEILLQCLLENTPVLEDVLGRIAKQSGELESHADRLYDSILASLDMLAGCTLIPDKKPMAAMEHPCEGV.

Basic and acidic residues-rich tracts occupy residues 1–17 (MALG…EDTK) and 86–96 (ANREPVAERSE). Disordered stretches follow at residues 1 to 47 (MALG…RLEA), 67 to 158 (WIGT…PSLA), 192 to 259 (QPSS…GGDA), 311 to 480 (PGPQ…ESDD), 509 to 551 (PTGD…SGDP), and 597 to 618 (LDRW…GGEQ). Positions 125 to 144 (LSSSEEFPQTLSLPRTTTIC) are enriched in polar residues. Low complexity-rich tracts occupy residues 192–206 (QPSS…TGSS) and 224–240 (VSSS…SSVV). Ser332 carries the phosphoserine; by PLK1 modification. Residues 339–355 (FSVSPASTLKSPTNVSP) are compositionally biased toward polar residues. Composition is skewed to basic and acidic residues over residues 405 to 432 (GSRD…KHLD) and 439 to 456 (RTRD…EKRT). The span at 457–467 (SQSARRPTCTE) shows a compositional bias: polar residues. Phosphoserine is present on residues Ser472 and Ser478. Over residues 524 to 543 (SDGPASFPSSSSQSQLPPGA) the composition is skewed to low complexity.

In terms of assembly, interacts with CNTLN; the interaction recruits CEP68 to the centrosome. Interacts with the SCF(FBXW11) complex which contains SKP1, CUL1 and FBXW11; the interaction is probably mediated by FBXW11 and the complex also contains CDK5RAP2 and PCNT. Also interacts with F-box protein BTRC. Interacts with serine/threonine-protein kinase PLK1; the interaction leads to phosphorylation of CEP68 and its subsequent degradation. Interacts with NEK2; the interaction leads to phosphorylation of CEP68. Post-translationally, phosphorylation by PLK1 is required for binding to BTRC in prometaphase. Phosphorylated directly or indirectly by NEK2. NEK2-mediated phosphorylation promotes CEP68 dissociation from the centrosome and its degradation at the onset of mitosis. Ubiquitinated and targeted for proteasomal degradation in early mitosis by the SCF(BTRC) and/or SCF(FBXW11) E3 ubiquitin-protein ligase complexes. Degradation is complete by prometaphase and is required for removal of CDK5RAP2 from the peripheral pericentriolar material and subsequent centriole separation.

The protein resides in the cytoplasm. It localises to the cytoskeleton. It is found in the microtubule organizing center. Its subcellular location is the centrosome. Its function is as follows. Involved in maintenance of centrosome cohesion, probably as part of a linker structure which prevents centrosome splitting. Required for localization of CDK5RAP2 to the centrosome during interphase. Contributes to CROCC/rootletin filament formation. The polypeptide is Centrosomal protein of 68 kDa (CEP68) (Homo sapiens (Human)).